We begin with the raw amino-acid sequence, 274 residues long: Nitrogenase iron protein (274 aa).

Residue 8–15 (GKGGIGKS) coordinates ATP. Cysteine 94 serves as a coordination point for [4Fe-4S] cluster. At arginine 97 the chain carries ADP-ribosylarginine; by dinitrogenase reductase ADP-ribosyltransferase. A [4Fe-4S] cluster-binding site is contributed by cysteine 131.

It belongs to the NifH/BchL/ChlL family. Homodimer. [4Fe-4S] cluster serves as cofactor. Post-translationally, the reversible ADP-ribosylation of Arg-97 inactivates the nitrogenase reductase and regulates nitrogenase activity.

It catalyses the reaction N2 + 8 reduced [2Fe-2S]-[ferredoxin] + 16 ATP + 16 H2O = H2 + 8 oxidized [2Fe-2S]-[ferredoxin] + 2 NH4(+) + 16 ADP + 16 phosphate + 6 H(+). Its function is as follows. The key enzymatic reactions in nitrogen fixation are catalyzed by the nitrogenase complex, which has 2 components: the iron protein and the molybdenum-iron protein. The polypeptide is Nitrogenase iron protein (Chlorobaculum parvum (strain DSM 263 / NCIMB 8327) (Chlorobium vibrioforme subsp. thiosulfatophilum)).